Reading from the N-terminus, the 438-residue chain is ATP-dependent RNA helicase sub2 (438 aa).

Over residues 23–36 (TTAAPAANGAPAKT) the composition is skewed to low complexity. Residues 23 to 42 (TTAAPAANGAPAKTGDLTVT) form a disordered region. Positions 58–86 (TGFRDFLLKGELLRAITDCGFEHPSEVCI) match the Q motif motif. The Helicase ATP-binding domain occupies 86-261 (IPTAILNVDV…KKFMRNPLEV (176 aa)). 99–106 (AKSGLGKT) contacts ATP. The DEAD box motif lies at 208-211 (DECD). The region spanning 289–434 (KLNDLLDNLE…EYPEGGVDSS (146 aa)) is the Helicase C-terminal domain.

It belongs to the DEAD box helicase family. DECD subfamily.

The protein localises to the nucleus. The enzyme catalyses ATP + H2O = ADP + phosphate + H(+). Functionally, ATP-binding RNA helicase involved in transcription elongation and required for the export of mRNA out of the nucleus. SUB2 also plays a role in pre-mRNA splicing and spliceosome assembly. May be involved in rDNA and telomeric silencing, and maintenance of genome integrity. The chain is ATP-dependent RNA helicase sub2 (sub2) from Aspergillus terreus (strain NIH 2624 / FGSC A1156).